The following is a 535-amino-acid chain: GMP synthase [glutamine-hydrolyzing] (535 aa).

The region spanning 4–210 is the Glutamine amidotransferase type-1 domain; the sequence is KILILDFGSQ…VHEICKCKPD (207 aa). The Nucleophile role is filled by cysteine 85. Catalysis depends on residues histidine 184 and glutamate 186. The region spanning 211–403 is the GMPS ATP-PPase domain; the sequence is WVMGDYIAEA…LGLPREMVYR (193 aa). 238–244 provides a ligand contact to ATP; the sequence is SGGVDSS.

Homodimer.

The catalysed reaction is XMP + L-glutamine + ATP + H2O = GMP + L-glutamate + AMP + diphosphate + 2 H(+). It participates in purine metabolism; GMP biosynthesis; GMP from XMP (L-Gln route): step 1/1. Functionally, catalyzes the synthesis of GMP from XMP. In Polynucleobacter necessarius subsp. necessarius (strain STIR1), this protein is GMP synthase [glutamine-hydrolyzing].